Here is a 241-residue protein sequence, read N- to C-terminus: Small ribosomal subunit protein uS2 (241 aa).

This sequence belongs to the universal ribosomal protein uS2 family.

This is Small ribosomal subunit protein uS2 from Sodalis glossinidius (strain morsitans).